Consider the following 585-residue polypeptide: Aspartate--tRNA ligase (585 aa).

Residue glutamate 173 coordinates L-aspartate. The segment at 197–200 (QTLK) is aspartate. Arginine 219 provides a ligand contact to L-aspartate. Residues 219–221 (RDE) and glutamine 228 each bind ATP. Residue histidine 446 participates in L-aspartate binding. An ATP-binding site is contributed by glutamate 480. Arginine 487 provides a ligand contact to L-aspartate. An ATP-binding site is contributed by 532 to 535 (GLDR).

This sequence belongs to the class-II aminoacyl-tRNA synthetase family. Type 1 subfamily. Homodimer.

Its subcellular location is the cytoplasm. The catalysed reaction is tRNA(Asp) + L-aspartate + ATP = L-aspartyl-tRNA(Asp) + AMP + diphosphate. Catalyzes the attachment of L-aspartate to tRNA(Asp) in a two-step reaction: L-aspartate is first activated by ATP to form Asp-AMP and then transferred to the acceptor end of tRNA(Asp). In Bacteroides fragilis (strain ATCC 25285 / DSM 2151 / CCUG 4856 / JCM 11019 / LMG 10263 / NCTC 9343 / Onslow / VPI 2553 / EN-2), this protein is Aspartate--tRNA ligase.